A 333-amino-acid chain; its full sequence is Tetraacyldisaccharide 4'-kinase (333 aa).

60-67 (TVGGTGKT) is an ATP binding site.

The protein belongs to the LpxK family.

The catalysed reaction is a lipid A disaccharide + ATP = a lipid IVA + ADP + H(+). It participates in glycolipid biosynthesis; lipid IV(A) biosynthesis; lipid IV(A) from (3R)-3-hydroxytetradecanoyl-[acyl-carrier-protein] and UDP-N-acetyl-alpha-D-glucosamine: step 6/6. Functionally, transfers the gamma-phosphate of ATP to the 4'-position of a tetraacyldisaccharide 1-phosphate intermediate (termed DS-1-P) to form tetraacyldisaccharide 1,4'-bis-phosphate (lipid IVA). The polypeptide is Tetraacyldisaccharide 4'-kinase (Pseudomonas putida (strain GB-1)).